Reading from the N-terminus, the 30-residue chain is Conotoxin TVIIA (30 aa).

Intrachain disulfides connect Cys-2-Cys-14, Cys-9-Cys-19, and Cys-13-Cys-24. Residues Pro-10 and Pro-11 each carry the 4-hydroxyproline modification.

In terms of processing, three different forms of TVIIA exist. Pro-10 and Pro-11 of conotoxin TVIIA are hydroxylated in TVIIA, whereas Pro-10 is not hydroxylated in [Pro10]TVIIA and neither Pro-10 nor Pro-11 are hydroxylated in [Pro10,11]TVIIA. As to expression, expressed by the venom duct.

Its subcellular location is the secreted. By structural similarity with conotoxin GS, may inhibit the sodium channel (Nav). No effect was observed upon intracranial injections into mice and intraperitoneal injections into goldfish (25 ug). The polypeptide is Conotoxin TVIIA (Conus tulipa (Fish-hunting cone snail)).